A 245-amino-acid chain; its full sequence is Ribonuclease PH (245 aa).

Residues Arg93 and 131–133 (GTR) contribute to the phosphate site.

The protein belongs to the RNase PH family. In terms of assembly, homohexameric ring arranged as a trimer of dimers.

It carries out the reaction tRNA(n+1) + phosphate = tRNA(n) + a ribonucleoside 5'-diphosphate. Phosphorolytic 3'-5' exoribonuclease that plays an important role in tRNA 3'-end maturation. Removes nucleotide residues following the 3'-CCA terminus of tRNAs; can also add nucleotides to the ends of RNA molecules by using nucleoside diphosphates as substrates, but this may not be physiologically important. Probably plays a role in initiation of 16S rRNA degradation (leading to ribosome degradation) during starvation. This chain is Ribonuclease PH, found in Corynebacterium efficiens (strain DSM 44549 / YS-314 / AJ 12310 / JCM 11189 / NBRC 100395).